An 804-amino-acid chain; its full sequence is MSHDDMSNSSGFNEAAASFSWNGPKKAINPYLDPAEVAPESALSNLITLYAADNEQEQLRREALSEQVWERYFFNESRDPVQREMEQDKLISRAKLAHEQQRFNPDMVILADVNAQPSHISKPLMQRIEYFSSLGRPKAYSRYLRETIKPCLERLEHIRDSQLSTSFRFMASHEGLDGLLILPEMSQEQVKRLSTLVAAHMSMCLDAACGDLYATDDVKPEEIRKTWERVAAETLRLDVIPPAFEQLRRKRNRRKPVPYELIPGSLARMLCADWWYRKLWKMRCEWREEQLRAVCLVSKKASPYVSYEAVMHKREQRRKSLEFFRSHELVNEDGDTLDMEDVVNASSSNPAHRRNEMMACVKGLELIAEMRGDCAVFYTITCPSRFHSTLNNGRPNPTWTNATVRQSSDYLVGMFAAFRKAMHKAGLRWYGVRVAEPHHDGTVHWHLLCFMRKKDRRAITALLCKFAIREDREELGNNTGPRFKSELINPRKGTPTSYIAKYISKNIDGRGLAGEISKETGKSLRDNAEYVNAWASLHRVQQFRFFGIPGRQAYRELRLLAGQAARQQGDKKAGAPVLDNPRLDAILAAADAGCFATYIMKQGGVLVPRKYHLIRTAYEINEEPTAYGDHGIRIYGIWSPIAEGKICTHAVKWKMVRKAVDVQEAVADQGACAPWTRGNNCPLAENLNQQAKDKSADGDTRTDITRMDDKELHDYLHSMSKKERRELAARLRLVKPKRRKDYKQRITDHQRQQLVYELKSRGFDGSEKEVDLLLRGGSIPSGAGLRIFYRNQRLQEDDKWRNLY.

Catalysis depends on O-(5'-phospho-DNA)-tyrosine intermediate residues Tyr498 and Tyr502.

This sequence belongs to the phage GPA family.

Functionally, possible endonuclease which induces a single-strand cut and initiates DNA replication. The polypeptide is Probable replication endonuclease from prophage-like region (Escherichia coli O6:H1 (strain CFT073 / ATCC 700928 / UPEC)).